The following is a 335-amino-acid chain: Dihydroorotate dehydrogenase (quinone) (335 aa).

Residues 58-62 (AGADK) and Thr-82 contribute to the FMN site. Substrate is bound at residue Lys-62. Position 107-111 (107-111 (NRNGF)) interacts with substrate. Residues Asn-135 and Asn-168 each contribute to the FMN site. Residue Asn-168 participates in substrate binding. Catalysis depends on Ser-171, which acts as the Nucleophile. Position 173 (Asn-173) interacts with substrate. 2 residues coordinate FMN: Lys-213 and Gly-241. 242 to 243 (NT) contributes to the substrate binding site. Residues Gly-264, Gly-293, and 314-315 (YS) contribute to the FMN site.

This sequence belongs to the dihydroorotate dehydrogenase family. Type 2 subfamily. Monomer. The cofactor is FMN.

The protein localises to the cell membrane. It catalyses the reaction (S)-dihydroorotate + a quinone = orotate + a quinol. The protein operates within pyrimidine metabolism; UMP biosynthesis via de novo pathway; orotate from (S)-dihydroorotate (quinone route): step 1/1. In terms of biological role, catalyzes the conversion of dihydroorotate to orotate with quinone as electron acceptor. The protein is Dihydroorotate dehydrogenase (quinone) of Actinobacillus pleuropneumoniae serotype 3 (strain JL03).